The primary structure comprises 213 residues: Motile sperm domain-containing protein 1 (213 aa).

The MSP domain maps to 16–143 (PVFVFPTELI…KEHLTESLFF (128 aa)). 2 helical membrane-spanning segments follow: residues 159–179 (SLLT…PTLG) and 191–211 (LSVN…MAIL). The Nuclear export signal motif lies at 205-208 (LITM).

It is found in the endoplasmic reticulum membrane. Its subcellular location is the golgi apparatus membrane. In terms of biological role, plays a role in differentiation and/or proliferation of mesenchymal stem cells. Proposed to be involved in epithelial-to-mesenchymal transition (EMT). However, another study suggests that it is not required for EMT or stem cell self-renewal and acts during later stages of differentiation. The sequence is that of Motile sperm domain-containing protein 1 (MOSPD1) from Pongo abelii (Sumatran orangutan).